Consider the following 346-residue polypeptide: MNPHATPVLVLSLALGTTITISSNHWVLAWTGLEINTLAIIPLISKSHHPRAVEAATKYFLTQAAASALVLFSSMTNAWATGQWDITQLNHPTSCLLLTAAIAIKLGLVPFHFWFPEVLQGSPLMTALLLSTLMKFPPLTLLLMTSKSLNPALLTTMALASAALGGWMGLNQTQTRKILAFSSISHLGWIAIILVYSPKLALLTFYLYAIMTSAVFMALNKIKALNLSMVLTSWTKTPVLNATLMLVLLSLAGLPPLTGFMPKWLIIQELTKQEMTPAAMAIAMLSLLSLFFYLRLAYHSTITLPPNSSNHMKQWYTSKPPSTPTAILASLSILLLPLSPMIHAIV.

A run of 11 helical transmembrane segments spans residues 1–21, 25–45, 60–80, 95–115, 124–144, 149–169, 178–195, 200–219, 242–262, 274–294, and 326–346; these read MNPH…TITI, HWVL…PLIS, FLTQ…NAWA, CLLL…HFWF, LMTA…LLLM, LNPA…GWMG, ILAF…IILV, LALL…FMAL, ATLM…GFMP, EMTP…FFYL, and AILA…HAIV.

The protein belongs to the complex I subunit 2 family.

Its subcellular location is the mitochondrion inner membrane. It carries out the reaction a ubiquinone + NADH + 5 H(+)(in) = a ubiquinol + NAD(+) + 4 H(+)(out). Functionally, core subunit of the mitochondrial membrane respiratory chain NADH dehydrogenase (Complex I) that is believed to belong to the minimal assembly required for catalysis. Complex I functions in the transfer of electrons from NADH to the respiratory chain. The immediate electron acceptor for the enzyme is believed to be ubiquinone. In Mareca falcata (Falcated duck), this protein is NADH-ubiquinone oxidoreductase chain 2 (MT-ND2).